We begin with the raw amino-acid sequence, 540 residues long: Telomerase Cajal body protein 1 (540 aa).

Pro residues predominate over residues 1-10 (MKTPEAPPLA). Residues 1 to 126 (MKTPEAPPLA…GEDVEGVSEE (126 aa)) form a disordered region. Phosphoserine occurs at positions 26, 30, 54, 64, 85, and 90. Over residues 116 to 126 (PGEDVEGVSEE) the composition is skewed to acidic residues. 6 WD repeats span residues 158-197 (QPENFLKGCKWAPDGSCILTNSADNILRIYNLPPELYNEG), 213-258 (EGDT…LRAS), 263-304 (NHLD…RDCE), 314-355 (GQSG…ALLG), 356-396 (GHQG…HPLW), and 402-441 (VTTNQRIYFDLDPTGQFLVSGSTSGAVSVWDTGGAGLESK). Threonine 480 is modified (phosphothreonine). Serine 482 carries the post-translational modification Phosphoserine. The interval 520–540 (SDAHQEEMGQGRTEGGGGEFT) is disordered. Residues 531 to 540 (RTEGGGGEFT) show a composition bias toward gly residues.

It belongs to the TCAB1 family. Component of the telomerase holoenzyme complex composed of one molecule of TERT, one molecule of WRAP53/TCAB1, two molecules of H/ACA ribonucleoprotein complex subunits DKC1, NOP10, NHP2 and GAR1, and a telomerase RNA template component (TERC). The telomerase holoenzyme complex is associated with TEP1, SMG6/EST1A and POT1. Interacts with the chaperonin-containing T-complex (TRiC) complex; which mediates the folding of WRAP53/TCAB1. Interacts with COIL. Interacts with SMN1. Interacts with RNF8. Interacts with histone H2AX. Phosphorylated at Ser-64 by ATM in response to DNA damage, promoting its interaction with histone H2AX and localization to sites of DNA double-strand breaks.

The protein localises to the nucleus. Its subcellular location is the cajal body. It is found in the chromosome. The protein resides in the telomere. Functionally, RNA chaperone that plays a key role in telomere maintenance and RNA localization to Cajal bodies. Specifically recognizes and binds the Cajal body box (CAB box) present in both small Cajal body RNAs (scaRNAs) and telomerase RNA template component (TERC). Essential component of the telomerase holoenzyme complex, a ribonucleoprotein complex essential for the replication of chromosome termini that elongates telomeres in most eukaryotes. In the telomerase holoenzyme complex, required to stimulate the catalytic activity of the complex. Acts by specifically binding the CAB box of the TERC RNA and controlling the folding of the CR4/CR5 region of the TERC RNA, a critical step for telomerase activity. In addition, also controls telomerase holoenzyme complex localization to Cajal body. During S phase, required for delivery of TERC to telomeres during S phase and for telomerase activity. In addition to its role in telomere maintenance, also required for Cajal body formation, probably by mediating localization of scaRNAs to Cajal bodies. Also plays a role in DNA repair: phosphorylated by ATM in response to DNA damage and relocalizes to sites of DNA double-strand breaks to promote the repair of DNA double-strand breaks. Acts by recruiting the ubiquitin ligase RNF8 to DNA breaks and promote both homologous recombination (HR) and non-homologous end joining (NHEJ). This chain is Telomerase Cajal body protein 1, found in Bos taurus (Bovine).